A 79-amino-acid polypeptide reads, in one-letter code: Acyl carrier protein (79 aa).

Residues 2–77 (DNIEQRVKKI…LAIDFAKSKA (76 aa)) form the Carrier domain. Ser-37 is modified (O-(pantetheine 4'-phosphoryl)serine).

This sequence belongs to the acyl carrier protein (ACP) family. Post-translationally, 4'-phosphopantetheine is transferred from CoA to a specific serine of apo-ACP by AcpS. This modification is essential for activity because fatty acids are bound in thioester linkage to the sulfhydryl of the prosthetic group.

The protein resides in the cytoplasm. It functions in the pathway lipid metabolism; fatty acid biosynthesis. Carrier of the growing fatty acid chain in fatty acid biosynthesis. The polypeptide is Acyl carrier protein (Polynucleobacter necessarius subsp. necessarius (strain STIR1)).